Here is a 162-residue protein sequence, read N- to C-terminus: MTAIQQFFKTFFLTELLKGLALTGRYTFKRKFTVQFPEEKTPISPRFRGLHALRRYENGEERCIACKLCEAVCPALAITIESETRADNTRRTTRYDIDLTKCIFCGFCEESCPVDSIVETQILEYHGEKRGDLYFTKDMLLAVGDRYEKEVAAAKAADARYR.

4Fe-4S ferredoxin-type domains follow at residues 54–83 and 93–122; these read RRYE…IESE and TRYD…ETQI. 8 residues coordinate [4Fe-4S] cluster: C63, C66, C69, C73, C102, C105, C108, and C112.

Belongs to the complex I 23 kDa subunit family. In terms of assembly, NDH-1 is composed of 14 different subunits. Subunits NuoA, H, J, K, L, M, N constitute the membrane sector of the complex. The cofactor is [4Fe-4S] cluster.

It localises to the cell inner membrane. The enzyme catalyses a quinone + NADH + 5 H(+)(in) = a quinol + NAD(+) + 4 H(+)(out). NDH-1 shuttles electrons from NADH, via FMN and iron-sulfur (Fe-S) centers, to quinones in the respiratory chain. The immediate electron acceptor for the enzyme in this species is believed to be ubiquinone. Couples the redox reaction to proton translocation (for every two electrons transferred, four hydrogen ions are translocated across the cytoplasmic membrane), and thus conserves the redox energy in a proton gradient. The polypeptide is NADH-quinone oxidoreductase subunit I (Burkholderia pseudomallei (strain 668)).